A 322-amino-acid chain; its full sequence is Fructose-1,6-bisphosphatase class 1 (322 aa).

Residues Glu-84, Asp-103, Leu-105, and Asp-106 each coordinate Mg(2+). Substrate is bound by residues 106–109, Asn-198, and Lys-264; that span reads DGSS. A Mg(2+)-binding site is contributed by Glu-270.

This sequence belongs to the FBPase class 1 family. Homotetramer. The cofactor is Mg(2+).

The protein localises to the cytoplasm. The enzyme catalyses beta-D-fructose 1,6-bisphosphate + H2O = beta-D-fructose 6-phosphate + phosphate. It participates in carbohydrate biosynthesis; gluconeogenesis. In Saccharophagus degradans (strain 2-40 / ATCC 43961 / DSM 17024), this protein is Fructose-1,6-bisphosphatase class 1.